The primary structure comprises 162 residues: Beta-carotene hydroxylase (162 aa).

Residues 8-135 enclose the Fatty acid hydroxylase domain; sequence VATVLVMELT…GRDHCVSFGF (128 aa).

Belongs to the sterol desaturase family.

The enzyme catalyses all-trans-beta-carotene + 4 reduced [2Fe-2S]-[ferredoxin] + 2 O2 + 4 H(+) = all-trans-zeaxanthin + 4 oxidized [2Fe-2S]-[ferredoxin] + 2 H2O. The protein operates within carotenoid biosynthesis; astaxanthin biosynthesis. Its function is as follows. Catalyzes the hydroxylation reaction from beta-carotene to zeaxanthin via beta-cryptoxanthin. This is Beta-carotene hydroxylase (crtZ) from Paracoccus sp. (strain PC1) (Alcaligenes sp. (strain PC1)).